The primary structure comprises 80 residues: Homeobox protein 7 (80 aa).

Positions Ser-8–Ser-67 form a DNA-binding region, homeobox. The segment at Arg-60 to Lys-80 is disordered. Positions Asn-70 to Lys-80 are enriched in low complexity.

Its subcellular location is the nucleus. Functionally, putative transcription factor. In Dictyostelium discoideum (Social amoeba), this protein is Homeobox protein 7 (hbx7).